Reading from the N-terminus, the 326-residue chain is Lipopolysaccharide heptosyltransferase 1 (326 aa).

Residues threonine 187, threonine 188, lysine 192, glutamate 222, and methionine 242 each contribute to the ADP site. The ADP-L-glycero-beta-D-manno-heptose site is built by threonine 187, threonine 188, lysine 192, glutamate 222, methionine 242, aspartate 261, threonine 262, glycine 263, and histidine 266. 2 residues coordinate ADP: threonine 262 and glycine 263.

The protein belongs to the glycosyltransferase 9 family. In terms of assembly, monomer.

It is found in the cell inner membrane. The enzyme catalyses an alpha-Kdo-(2-&gt;4)-alpha-Kdo-(2-&gt;6)-lipid A + ADP-L-glycero-beta-D-manno-heptose = an L-alpha-D-Hep-(1-&gt;5)-[alpha-Kdo-(2-&gt;4)]-alpha-Kdo-(2-&gt;6)-lipid A + ADP + H(+). It catalyses the reaction alpha-Kdo-(2-&gt;4)-alpha-Kdo-(2-&gt;6)-lipid A (E. coli) + ADP-L-glycero-beta-D-manno-heptose = L-alpha-D-Hep-(1-&gt;5)-[alpha-Kdo-(2-&gt;4)]-alpha-Kdo-(2-&gt;6)-lipid A (E. coli) + ADP + H(+). It functions in the pathway bacterial outer membrane biogenesis; LPS core biosynthesis. With respect to regulation, inhibited by ADP-L-glycero-beta-D-gluco-2-deoxy-2-fluoro-heptose (ADP-2F-heptose), a non-cleavable analog of the substrate ADP-L-glycero-beta-D-manno-heptose. Its function is as follows. Glycosyltransferase involved in the biosynthesis of the core oligosaccharide region of lipopolysaccharide (LPS). Catalyzes the addition of the first heptose unit to one 3-deoxy-D-manno-octulosonic acid (Kdo) residue of the Kdo2-lipid A module. In Escherichia coli O18:K1:H7 (strain RS218 / NMEC), this protein is Lipopolysaccharide heptosyltransferase 1.